Consider the following 91-residue polypeptide: Large ribosomal subunit protein eL43 (91 aa).

A C4-type zinc finger spans residues 39–60 (CSFCGKEAMKRKATGIWNCAKC).

Belongs to the eukaryotic ribosomal protein eL43 family.

This is Large ribosomal subunit protein eL43 from Caenorhabditis elegans.